The following is a 371-amino-acid chain: Putative HAD-like hydrolase Noc_2718 (371 aa).

An HAD-like hydrolase region spans residues 1-288; that stretch reads MKQKILLCSD…TGREESAEEE (288 aa). Residues 291-371 enclose the YcgL domain; that stretch reads QSCAIYRSCK…QLSSREYRRS (81 aa).

The protein in the N-terminal section; belongs to the HAD-like hydrolase superfamily.

This Nitrosococcus oceani (strain ATCC 19707 / BCRC 17464 / JCM 30415 / NCIMB 11848 / C-107) protein is Putative HAD-like hydrolase Noc_2718.